Consider the following 406-residue polypeptide: Aspartokinase (406 aa).

One can recognise an ACT domain in the interval 342-406; the sequence is IIGHGIKNDL…LLKISETGHC (65 aa).

It belongs to the aspartokinase family.

The enzyme catalyses L-aspartate + ATP = 4-phospho-L-aspartate + ADP. It functions in the pathway amino-acid biosynthesis; L-lysine biosynthesis via DAP pathway; (S)-tetrahydrodipicolinate from L-aspartate: step 1/4. It participates in amino-acid biosynthesis; L-methionine biosynthesis via de novo pathway; L-homoserine from L-aspartate: step 1/3. Its pathway is amino-acid biosynthesis; L-threonine biosynthesis; L-threonine from L-aspartate: step 1/5. This is Aspartokinase (lysC) from Rickettsia bellii (strain RML369-C).